Consider the following 262-residue polypeptide: 2-aminoethylphosphonate dioxygenase (262 aa).

Lys-108 lines the 2-oxoglutarate pocket. The Fe cation site is built by His-118, Asp-120, and His-198.

The protein belongs to the PhyH family. Requires Fe(2+) as cofactor.

It carries out the reaction (2-aminoethyl)phosphonate + 2-oxoglutarate + O2 = (1R)-(2-amino-1-hydroxyethyl)phosphonate + succinate + CO2. Its activity is regulated as follows. Activity is enhanced by ascorbate. Its function is as follows. Involved in the degradation of the organophosphonate 2-aminoethylphosphonic acid (2-AEP). Catalyzes the hydroxylation of 2-aminoethylphosphonic acid to yield (2-amino-1-hydroxyethyl)phosphonic acid. The chain is 2-aminoethylphosphonate dioxygenase from Uncultured bacterium HF130_AEPn_1.